The following is a 79-amino-acid chain: Small ribosomal subunit protein bS16 (79 aa).

This sequence belongs to the bacterial ribosomal protein bS16 family.

The polypeptide is Small ribosomal subunit protein bS16 (Hahella chejuensis (strain KCTC 2396)).